Consider the following 228-residue polypeptide: UPF0173 metal-dependent hydrolase Dred_1740 (228 aa).

Belongs to the UPF0173 family.

The chain is UPF0173 metal-dependent hydrolase Dred_1740 from Desulforamulus reducens (strain ATCC BAA-1160 / DSM 100696 / MI-1) (Desulfotomaculum reducens).